The following is a 284-amino-acid chain: Cysteine-rich repeat secretory protein 8 (284 aa).

An N-terminal signal peptide occupies residues 1–27 (MATFIRFTAPLFCFFFLFSLFSHQTMS). Gnk2-homologous domains follow at residues 32–136 (MATF…NVSF) and 151–259 (SLAT…TTGL).

This sequence belongs to the cysteine-rich repeat secretory protein family.

The protein localises to the secreted. The polypeptide is Cysteine-rich repeat secretory protein 8 (CRRSP8) (Arabidopsis thaliana (Mouse-ear cress)).